Reading from the N-terminus, the 98-residue chain is Flagellar hook-basal body complex protein FliE (98 aa).

Over residues 1 to 23 the composition is skewed to low complexity; it reads MNNINDLRLNNNISNTNKSQNST. Residues 1–24 are disordered; it reads MNNINDLRLNNNISNTNKSQNSTG.

Belongs to the FliE family.

The protein resides in the bacterial flagellum basal body. The protein is Flagellar hook-basal body complex protein FliE of Campylobacter jejuni subsp. jejuni serotype O:2 (strain ATCC 700819 / NCTC 11168).